The chain runs to 457 residues: uncharacterized protein (457 aa).

The next 2 helical transmembrane spans lie at 1–21 (MVSS…MTLL) and 250–270 (ILIV…ATTF).

It localises to the membrane. This is an uncharacterized protein from Saccharomyces cerevisiae (strain ATCC 204508 / S288c) (Baker's yeast).